A 129-amino-acid polypeptide reads, in one-letter code: Histone H3-like centromeric protein A (129 aa).

Basic residues predominate over residues 1 to 14 (MGPRRKPRTPRRRP). The segment at 1–30 (MGPRRKPRTPRRRPSSPVPGPSRRSSRPGK) is disordered. Residue Gly-2 is modified to N,N,N-trimethylglycine. Ser-16, Ser-22, and Ser-57 each carry phosphoserine. The interval 30-129 (KRRKFLWLKE…RIRGIEGGLG (100 aa)) is H3-like. Residues 64-105 (CGKFTRGVDLCWQAQALLALQEAAEAFLVHLFEDAYLLTLHA) are CATD.

It belongs to the histone H3 family. In terms of assembly, component of centromeric nucleosomes, where DNA is wrapped around a histone octamer core. The octamer contains two molecules each of H2A, H2B, CENPA and H4 assembled in one CENPA-H4 heterotetramer and two H2A-H2B heterodimers. CENPA modulates the DNA-binding characteristics of nucleosomes so that protruding DNA ends have higher flexibility than in nucleosomes containing conventional histone H3. Inhibits binding of histone H1 to nucleosomes, since histone H1 binds preferentially to rigid DNA linkers that protrude from nucleosomes. Nucleosomes containing CENPA also contain histone H2A variants such as MACROH2A and H2A.Z/H2AZ1. The CENPA-H4 heterotetramer is more compact and structurally more rigid than corresponding H3-H4 heterotetramers. Can assemble into nucleosomes that contain both CENPA and histone H3.3; these nucleosomes interact with a single CENPC chain. Heterotrimer composed of HJURP, CENPA and histone H4, where HJURP interacts with the dimer formed by CENPA and histone H4 and prevents tetramerization of CENPA and H4. Component of the CENPA-NAC complex, at least composed of CENPA, CENPC, CENPH, CENPM, CENPN, CENPT and CENPU. Interacts (via CATD domain) with HJURP; the interaction is direct and is required for its localization to centromeres. Interacts with CENPC, CENPN and CENPT; interaction is direct. Part of a centromere complex consisting of CENPA, CENPT and CENPW. Identified in centromere complexes containing histones H2A, H2B and H4, and at least CENPA, CENPB, CENPC, CENPT, CENPN, HJURP, SUPT16H, SSRP1 and RSF1. Can self-associate. The CENPA-H4 heterotetramer can bind DNA by itself (in vitro). Interacts with CDK1, PPP1CA and RBBP7. Trimethylated by NTMT1 at the N-terminal glycine after cleavage of Met-1. Methylation is low before incorporation into nucleosomes and increases with cell cycle progression, with the highest levels in mitotic nucleosomes. Post-translationally, phosphorylated by CDK1 at Ser-57 during early mitosis; this abolishes association with chromatin and centromeres, prevents interaction with HJURP and thereby prevents premature assembly of CENPA into centromeres. Dephosphorylated at Ser-57 by PPP1CA during late mitosis. In terms of processing, poly-ADP-ribosylated by PARP1.

It localises to the nucleus. Its subcellular location is the chromosome. The protein localises to the centromere. Histone H3-like nucleosomal protein that is specifically found in centromeric nucleosomes. Replaces conventional H3 in the nucleosome core of centromeric chromatin that serves as an assembly site for the inner kinetochore. The presence of CENPA subtly modifies the nucleosome structure and the way DNA is wrapped around the nucleosome and gives rise to protruding DNA ends that are less well-ordered and rigid compared to nucleosomes containing histone H3. May serve as an epigenetic mark that propagates centromere identity through replication and cell division. Required for recruitment and assembly of kinetochore proteins, and as a consequence required for progress through mitosis, chromosome segregation and cytokinesis. The sequence is that of Histone H3-like centromeric protein A (CENPA) from Cricetulus griseus (Chinese hamster).